Consider the following 264-residue polypeptide: Virulence plasmid protein pGP3-D (264 aa).

This Chlamydia trachomatis serovar L2 (strain ATCC VR-902B / DSM 19102 / 434/Bu) protein is Virulence plasmid protein pGP3-D.